The chain runs to 331 residues: Ketol-acid reductoisomerase (NADP(+)) (331 aa).

Positions 2 to 182 constitute a KARI N-terminal Rossmann domain; it reads ARMYYDQDAN…GGTRAGILET (181 aa). NADP(+) contacts are provided by residues 25–28, S51, S53, and 83–86; these read YGSQ and DEVQ. Residue H108 is part of the active site. Residue G134 participates in NADP(+) binding. The 146-residue stretch at 183 to 328 folds into the KARI C-terminal knotted domain; the sequence is TFREETETDL…KDLRAMFSWL (146 aa). Residues D191, E195, E227, and E231 each contribute to the Mg(2+) site. Position 252 (S252) interacts with substrate.

Belongs to the ketol-acid reductoisomerase family. Homooctamer. Mg(2+) is required as a cofactor.

It carries out the reaction (2R)-2,3-dihydroxy-3-methylbutanoate + NADP(+) = (2S)-2-acetolactate + NADPH + H(+). It catalyses the reaction (2R,3R)-2,3-dihydroxy-3-methylpentanoate + NADP(+) = (S)-2-ethyl-2-hydroxy-3-oxobutanoate + NADPH + H(+). The protein operates within amino-acid biosynthesis; L-isoleucine biosynthesis; L-isoleucine from 2-oxobutanoate: step 2/4. Its pathway is amino-acid biosynthesis; L-valine biosynthesis; L-valine from pyruvate: step 2/4. Functionally, involved in the biosynthesis of branched-chain amino acids (BCAA). Catalyzes an alkyl-migration followed by a ketol-acid reduction of (S)-2-acetolactate (S2AL) to yield (R)-2,3-dihydroxy-isovalerate. In the isomerase reaction, S2AL is rearranged via a Mg-dependent methyl migration to produce 3-hydroxy-3-methyl-2-ketobutyrate (HMKB). In the reductase reaction, this 2-ketoacid undergoes a metal-dependent reduction by NADPH to yield (R)-2,3-dihydroxy-isovalerate. This Synechocystis sp. (strain ATCC 27184 / PCC 6803 / Kazusa) protein is Ketol-acid reductoisomerase (NADP(+)).